The chain runs to 86 residues: RQC P-site tRNA stabilizing factor (86 aa).

Positions 1–62 constitute an S4 RNA-binding domain; it reads MRLDKFLKVS…QKLVTVQVNE (62 aa).

It belongs to the RqcP family. In terms of assembly, associates with stalled 50S ribosomal subunits. Binds to RqcH, 23S rRNA and the P-site tRNA. Does not require RqcH for association with 50S subunits. Crystallized 50S subunits are variously associated with an A/P-site tRNA with or without RqcH, as well as with P- and E-site tRNAs but no RqcH. Displaced from the 50S subunit by puromycin but not thiostrepton.

In terms of biological role, key component of the ribosome quality control system (RQC), a ribosome-associated complex that mediates the extraction of incompletely synthesized nascent chains from stalled ribosomes and their subsequent degradation. RqcH recruits Ala-charged tRNA, and with RqcP directs the elongation of stalled nascent chains on 50S ribosomal subunits, leading to non-templated C-terminal alanine extensions (Ala tail). The Ala tail promotes nascent chain degradation. RqcP is associated with the translocation-like movement of the peptidyl-tRNA from the A-site into the P-site. RqcH, RqcP and charged tRNA(Ala) are necessary and sufficient to add an Ala tail to a model stalled nascent peptide; does not add Val. The sequence is that of RQC P-site tRNA stabilizing factor from Bacillus subtilis (strain 168).